The primary structure comprises 185 residues: Elongation factor P (185 aa).

This sequence belongs to the elongation factor P family.

It localises to the cytoplasm. Its pathway is protein biosynthesis; polypeptide chain elongation. In terms of biological role, involved in peptide bond synthesis. Stimulates efficient translation and peptide-bond synthesis on native or reconstituted 70S ribosomes in vitro. Probably functions indirectly by altering the affinity of the ribosome for aminoacyl-tRNA, thus increasing their reactivity as acceptors for peptidyl transferase. This is Elongation factor P from Oceanobacillus iheyensis (strain DSM 14371 / CIP 107618 / JCM 11309 / KCTC 3954 / HTE831).